Reading from the N-terminus, the 487-residue chain is MAQPRYDDGLHGYGMDSGAAAAAMYDPHAGHRPPGLQGLPSHHSPHMTHAAAAAATVGMHGYHSGAGGHGTPSHVSPVGNHLMGAIPEVHKRDKDAIYEHPLFPLLALIFEKCELATCTPREPGVQGGDVCSSESFNEDIAMFSKQIRSQKPYYTADPEVDSLMVQAIQVLRFHLLELEKVHELCDNFCHRYISCLKGKMPIDLVIDERDTTKPPELGSANGEGRSNADSTSHTDGASTPDVRPPSSSLSYGGAMNDDARSPGAGSTPGPLSQQPPALDTSDPDGKFLSSLNPSELTYDGRWCRREWSSPADARNADASRRLYSSVFLGSPDNFGTSASGDASNASIGSGEGTGEEDDDASGKKNQKKRGIFPKVATNILRAWLFQHLTHPYPSEDQKKQLAQDTGLTILQVNNWFINARRRIVQPMIDQSNRAVYTPHPGPSGYGHDAMGYMMDSQAHMMHRPPGDPGFHQGYPHYPPAEYYGQHL.

Disordered stretches follow at residues 25–49 (YDPH…HMTH), 210–292 (DTTK…SSLN), and 333–369 (NFGT…QKKR). Positions 127 to 211 (GGDVCSSESF…IDLVIDERDT (85 aa)) constitute an MEIS N-terminal domain. Composition is skewed to polar residues over residues 227-237 (NADSTSHTDGA) and 333-345 (NFGT…ASNA). The segment at residues 365–427 (NQKKRGIFPK…NARRRIVQPM (63 aa)) is a DNA-binding region (homeobox; TALE-type).

This sequence belongs to the TALE/MEIS homeobox family. In terms of assembly, interacts with exd; required for nuclear translocation of exd. As to expression, in the wing disk, the expression is present in the regions corresponding to notum, wing hinge and ventral pleura. In the leg disk, the expression is in the periphery region, corresponding to the proximal segments of the legs. In the antennal disk, the expression is in all but the arista region. In the eye disk, the expression is strong in the anterior region surrounding the eye field, including the regions corresponding to ptilinum, ocellus and head capsules, and weak in the posterior and lateral margins of the eye disk. Expressed specifically in maturating inner photoreceptors of the DRA and maintained through adulthood.

The protein resides in the nucleus. All isoforms are required for patterning of the embryonic cuticle. Acts with exd to delimit the eye field and prevent inappropriate eye development. Isoforms that carry the homeodomain are required for proper localization of chordotonal organs within the peripheral nervous system and antennal identity; required to activate antennal-specific genes, such as sal and to repress the leg-like expression of dac. Necessary for the nuclear localization of the essential HOX cofactor, extradenticle (exd). Both necessary and sufficient for inner photoreceptors to adopt the polarization-sensitive 'dorsal rim area' (DRA) of the eye fate instead of the color-sensitive default state. This occurs by increasing rhabdomere size and uncoupling R7-R8 communication to allow both cells to express the same opsin rather than different ones as required for color vision. In Drosophila melanogaster (Fruit fly), this protein is Homeobox protein homothorax.